The primary structure comprises 245 residues: Pyridoxine 5'-phosphate synthase (245 aa).

N7 contacts 3-amino-2-oxopropyl phosphate. Residue D9–H10 participates in 1-deoxy-D-xylulose 5-phosphate binding. R18 provides a ligand contact to 3-amino-2-oxopropyl phosphate. The Proton acceptor role is filled by H43. 1-deoxy-D-xylulose 5-phosphate contacts are provided by R45 and H50. E70 serves as the catalytic Proton acceptor. T100 contacts 1-deoxy-D-xylulose 5-phosphate. Catalysis depends on H190, which acts as the Proton donor. 3-amino-2-oxopropyl phosphate-binding positions include G191 and G212 to H213.

Belongs to the PNP synthase family. Homooctamer; tetramer of dimers.

It localises to the cytoplasm. It carries out the reaction 3-amino-2-oxopropyl phosphate + 1-deoxy-D-xylulose 5-phosphate = pyridoxine 5'-phosphate + phosphate + 2 H2O + H(+). It participates in cofactor biosynthesis; pyridoxine 5'-phosphate biosynthesis; pyridoxine 5'-phosphate from D-erythrose 4-phosphate: step 5/5. Its function is as follows. Catalyzes the complicated ring closure reaction between the two acyclic compounds 1-deoxy-D-xylulose-5-phosphate (DXP) and 3-amino-2-oxopropyl phosphate (1-amino-acetone-3-phosphate or AAP) to form pyridoxine 5'-phosphate (PNP) and inorganic phosphate. This chain is Pyridoxine 5'-phosphate synthase, found in Prochlorococcus marinus (strain NATL1A).